Here is a 443-residue protein sequence, read N- to C-terminus: 3-phosphoshikimate 1-carboxyvinyltransferase (443 aa).

The 3-phosphoshikimate site is built by lysine 24, serine 25, and arginine 29. Residue lysine 24 participates in phosphoenolpyruvate binding. Positions 95 and 123 each coordinate phosphoenolpyruvate. 3-phosphoshikimate contacts are provided by serine 167, glutamine 169, aspartate 323, and lysine 350. A phosphoenolpyruvate-binding site is contributed by glutamine 169. The active-site Proton acceptor is aspartate 323. Phosphoenolpyruvate is bound by residues arginine 354 and arginine 398.

The protein belongs to the EPSP synthase family. As to quaternary structure, monomer.

Its subcellular location is the cytoplasm. The catalysed reaction is 3-phosphoshikimate + phosphoenolpyruvate = 5-O-(1-carboxyvinyl)-3-phosphoshikimate + phosphate. It participates in metabolic intermediate biosynthesis; chorismate biosynthesis; chorismate from D-erythrose 4-phosphate and phosphoenolpyruvate: step 6/7. Functionally, catalyzes the transfer of the enolpyruvyl moiety of phosphoenolpyruvate (PEP) to the 5-hydroxyl of shikimate-3-phosphate (S3P) to produce enolpyruvyl shikimate-3-phosphate and inorganic phosphate. This chain is 3-phosphoshikimate 1-carboxyvinyltransferase, found in Caulobacter vibrioides (strain ATCC 19089 / CIP 103742 / CB 15) (Caulobacter crescentus).